Here is a 228-residue protein sequence, read N- to C-terminus: 5'-methylthioadenosine/S-adenosylhomocysteine nucleosidase (228 aa).

E11 serves as the catalytic Proton acceptor. Residues G77, I151, and 172–173 contribute to the substrate site; that span reads ME. Residue D196 is the Proton donor of the active site.

This sequence belongs to the PNP/UDP phosphorylase family. MtnN subfamily.

It catalyses the reaction S-adenosyl-L-homocysteine + H2O = S-(5-deoxy-D-ribos-5-yl)-L-homocysteine + adenine. It carries out the reaction S-methyl-5'-thioadenosine + H2O = 5-(methylsulfanyl)-D-ribose + adenine. The catalysed reaction is 5'-deoxyadenosine + H2O = 5-deoxy-D-ribose + adenine. It functions in the pathway amino-acid biosynthesis; L-methionine biosynthesis via salvage pathway; S-methyl-5-thio-alpha-D-ribose 1-phosphate from S-methyl-5'-thioadenosine (hydrolase route): step 1/2. Its function is as follows. Catalyzes the irreversible cleavage of the glycosidic bond in both 5'-methylthioadenosine (MTA) and S-adenosylhomocysteine (SAH/AdoHcy) to adenine and the corresponding thioribose, 5'-methylthioribose and S-ribosylhomocysteine, respectively. Also cleaves 5'-deoxyadenosine, a toxic by-product of radical S-adenosylmethionine (SAM) enzymes, into 5-deoxyribose and adenine. This Staphylococcus aureus (strain bovine RF122 / ET3-1) protein is 5'-methylthioadenosine/S-adenosylhomocysteine nucleosidase.